Reading from the N-terminus, the 394-residue chain is DNA repair protein brc-2 (394 aa).

Residues 1 to 12 (MGDSSKKVKDSF) show a composition bias toward basic and acidic residues. 2 disordered regions span residues 1 to 30 (MGDSSKKVKDSFDTISEPDSFDEPKGVPIS) and 56 to 136 (MLNS…EKKK). The segment at 1–60 (MGDSSKKVKDSFDTISEPDSFDEPKGVPISMEPVFSTAAGIRIDVKQESIDKSKKMLNSD) is interaction with rad-51. Residues 28–62 (PISMEPVFSTAAGIRIDVKQESIDKSKKMLNSDLK) form a BRCA2 repeat-like region region. A compositionally biased stretch (low complexity) spans 56-73 (MLNSDLKSKSSSKGGFSS). The interaction with rad-51-DNA complexes stretch occupies residues 60 to 89 (DLKSKSSSKGGFSSPLVRKNNGSSAFVSPF). A compositionally biased stretch (basic residues) spans 124-134 (KKSKKHSKKEK). Positions 371–389 (WKDFGSYLKHKEDKKKRRS) are required for ssDNA binding.

Interacts (via N-terminus) with rad-51; regulates rad-51 recruitment to sites of DNA double strand breaks. In terms of tissue distribution, expressed in the germline, with highest expression in cells undergoing oogenesis.

Its subcellular location is the nucleus. It localises to the chromosome. Required for the homologous recombination repair of DNA double strand breaks, thereby playing a role in chromosome integrity. Acts by targeting rad-51 to sites of DNA damage and stabilizing rad-51-DNA filaments by blocking ATP hydrolysis catalyzed by rad-51. Promotes rad-51 mediated displacement-loop (D-loop) formation during strand invasion between the invading single-stranded DNA (ssDNA) and the homologous duplex DNA. Also functions independently of rad-51 in DNA double-strand break (DSB) repair by promoting DNA single-strand annealing (SSA) when the homologous recombination (HR) and non-homologous end joining (NHEJ) pathways are compromised. Binds selectively to single-stranded (ssDNA) via its C-terminus. Involved in telomere maintenance and replicative senescence. The polypeptide is DNA repair protein brc-2 (Caenorhabditis elegans).